A 142-amino-acid polypeptide reads, in one-letter code: Hemoglobin subunit alpha-2 (142 aa).

The Globin domain maps to L2–R142. Position 59 (H59) interacts with O2. H88 serves as a coordination point for heme b.

It belongs to the globin family. As to quaternary structure, heterotetramer of two alpha chains and two beta chains. As to expression, red blood cells.

Functionally, involved in oxygen transport from the lung to the various peripheral tissues. This chain is Hemoglobin subunit alpha-2 (hba2), found in Xenopus laevis (African clawed frog).